Reading from the N-terminus, the 790-residue chain is Protein SEY1 (790 aa).

The Cytoplasmic portion of the chain corresponds to 1–692; sequence MELSEGELSH…KRSIVQHITQ (692 aa). One can recognise a GB1/RHD3-type G domain in the interval 55-284; the sequence is GNNYHIISVF…VSNELFKPEY (230 aa). 65-72 contributes to the GTP binding site; sequence GSQSTGKS. The helical transmembrane segment at 693-713 threads the bilayer; the sequence is IPYYIYLIILVLGWNEFMAII. At 714–716 the chain is on the lumenal side; the sequence is RNP. A helical membrane pass occupies residues 717–737; sequence LFFSLSIVLGATVYVLYYLGL. Residues 738-790 lie on the Cytoplasmic side of the membrane; that stretch reads LRPALVVAQRTMDEVIVMAKTKLREVLIDDHEVTGRQLNKMAGSKENIELDDM.

This sequence belongs to the TRAFAC class dynamin-like GTPase superfamily. GB1/RHD3 GTPase family. RHD3 subfamily.

Its subcellular location is the endoplasmic reticulum membrane. Its function is as follows. Cooperates with the reticulon proteins and tubule-shaping DP1 family proteins to generate and maintain the structure of the tubular endoplasmic reticulum network. Has GTPase activity, which is required for its function in ER organization. This chain is Protein SEY1, found in Candida albicans (strain WO-1) (Yeast).